The chain runs to 241 residues: Xyloglucan-specific endo-beta-1,4-glucanase 1 (241 aa).

An N-terminal signal peptide occupies residues 1-19 (MKGFFAGVVAAATLAVASA). The active site involves Glu136. N-linked (GlcNAc...) asparagine glycans are attached at residues Asn174 and Asn190. Glu222 is a catalytic residue.

This sequence belongs to the glycosyl hydrolase 12 (cellulase H) family. In terms of assembly, interacts with host apoplastic glucanase inhibitor GIP1.

It localises to the secreted. The protein localises to the host. It carries out the reaction xyloglucan + H2O = xyloglucan oligosaccharides.. Its activity is regulated as follows. The xyloglucanase activity is inhibited by the binding of the host apoplastic glucanase inhibitor GIP1. Glycoside hydrolase that exhibits xyloglucanase activity. Acts as an important virulence factor during P.sojae infection but also acts as a pathogen-associated molecular pattern (PAMP) in soybean and solanaceous species, where it can trigger defense responses including cell death. XEG1-induced cell death can be suppressed by P.sojae RxLR effectors. The PAMP activity is independent of its xyloglucanase activity. XEG1 induces plant defense responses in a RLP kinase Serk3/Bak1-dependent manner in Nicotiana benthamiana. Moreover, the perception of XEG1 occurs independently of the perception of ethylene-inducing xylanase Eix2 in Tomato. With truncated paralog XLP1, is required to elevate apoplastic sugar during P.sojae infection. This chain is Xyloglucan-specific endo-beta-1,4-glucanase 1, found in Phytophthora sojae (strain P6497) (Soybean stem and root rot agent).